The following is a 519-amino-acid chain: 2,3-bisphosphoglycerate-independent phosphoglycerate mutase (519 aa).

Residues Asp18 and Ser68 each coordinate Mn(2+). Ser68 functions as the Phosphoserine intermediate in the catalytic mechanism. Residues His129, 159–160, Arg191, Arg197, 267–270, and Lys341 each bind substrate; these read RD and RADR. Mn(2+)-binding residues include Asp408, His412, Asp449, His450, and His468.

This sequence belongs to the BPG-independent phosphoglycerate mutase family. In terms of assembly, monomer. Mn(2+) is required as a cofactor.

The catalysed reaction is (2R)-2-phosphoglycerate = (2R)-3-phosphoglycerate. It functions in the pathway carbohydrate degradation; glycolysis; pyruvate from D-glyceraldehyde 3-phosphate: step 3/5. In terms of biological role, catalyzes the interconversion of 2-phosphoglycerate and 3-phosphoglycerate. The polypeptide is 2,3-bisphosphoglycerate-independent phosphoglycerate mutase (Coxiella burnetii (strain RSA 331 / Henzerling II)).